A 223-amino-acid polypeptide reads, in one-letter code: MPSRLDARATRHYFDSAFHCPAVKVLPNEYYVAAGEDIMISTVLGSCVAACIRDPRAGVGGMNHFMLPEGDGDSPSSATMRYGAFAMEVLINELLKAGAARERLEAKVFGGGAVLSAMQQMNIGERNARFVLNYLNTEGIPVLAQDLGDVHARRIGYFPRDGRVMVRRLAPHHHKAEVLIAQREQVAAQTASAKAHTPPQIERFSAPAKPRFERFTRPSTATS.

Positions 189-223 are disordered; sequence QTASAKAHTPPQIERFSAPAKPRFERFTRPSTATS.

Belongs to the CheD family.

The enzyme catalyses L-glutaminyl-[protein] + H2O = L-glutamyl-[protein] + NH4(+). Functionally, probably deamidates glutamine residues to glutamate on methyl-accepting chemotaxis receptors (MCPs), playing an important role in chemotaxis. The polypeptide is Probable chemoreceptor glutamine deamidase CheD (Bordetella petrii (strain ATCC BAA-461 / DSM 12804 / CCUG 43448)).